The sequence spans 576 residues: Eukaryotic translation initiation factor 3 subunit D (576 aa).

The tract at residues 103 to 176 (DSTKTRFGRG…KDYDKPQRNR (74 aa)) is disordered. Positions 110–122 (GRGGLARGRGQRG) are enriched in gly residues. Over residues 165 to 176 (GWKDYDKPQRNR) the composition is skewed to basic and acidic residues. Residues 304–318 (TLDMVTVNENAADAP) are RNA gate.

The protein belongs to the eIF-3 subunit D family. As to quaternary structure, component of the eukaryotic translation initiation factor 3 (eIF-3) complex.

The protein localises to the cytoplasm. Its function is as follows. mRNA cap-binding component of the eukaryotic translation initiation factor 3 (eIF-3) complex, which is involved in protein synthesis of a specialized repertoire of mRNAs and, together with other initiation factors, stimulates binding of mRNA and methionyl-tRNAi to the 40S ribosome. The eIF-3 complex specifically targets and initiates translation of a subset of mRNAs involved in cell proliferation. In the eIF-3 complex, eif3d specifically recognizes and binds the 7-methylguanosine cap of a subset of mRNAs. This chain is Eukaryotic translation initiation factor 3 subunit D, found in Botryotinia fuckeliana (strain B05.10) (Noble rot fungus).